The primary structure comprises 702 residues: Epsin-1 (702 aa).

Residues 10–142 (NFSKGYTDTQ…EDEHALKEAR (133 aa)) form the ENTH domain. Basic and acidic residues-rich tracts occupy residues 136–160 (HALK…SSRF) and 183–192 (SRYDDDDRDH). Positions 136 to 285 (HALKEARGDS…HQREREQQEQ (150 aa)) are disordered. The segment covering 193 to 214 (RSRRRSRSRRPGRSRSRRRSRR) has biased composition (basic residues). 4 positions are modified to phosphoserine: Ser-212, Ser-216, Ser-218, and Ser-223. 2 UIM domains span residues 226–245 (ENDP…AEED) and 254–273 (DSEA…DEAR). The segment covering 230 to 248 (ELQRVIEESKRQAEEDAKR) has biased composition (basic and acidic residues). Ser-255 is modified (phosphoserine). Residues 266 to 283 (SKEEDEARQRHQREREQQ) show a composition bias toward basic and acidic residues. A Phosphothreonine modification is found at Thr-406. Disordered regions lie at residues 504-589 (NHTG…RTGD) and 683-702 (PMQG…LIDL). Residues 514–534 (TGLQRQTTGYTGNNNPYSRPL) are compositionally biased toward polar residues. Over residues 535–549 (QSQSTGILQQQQQQS) the composition is skewed to low complexity. The span at 557–577 (KTGSNNPFAQFSNLPSQSTAP) shows a compositional bias: polar residues. Positions 683–695 (PMQGMQQQSMQPQ) are enriched in low complexity.

Belongs to the epsin family.

The protein localises to the cytoplasm. The protein resides in the membrane. Its function is as follows. Binds to membranes enriched in phosphatidylinositol 3,5-bisphosphate (PtdIns(3,5)P2) and phosphatidylinositol 4,5-bisphosphate (PtdIns(4,5)P2). Required for endocytosis and localization of actin. The protein is Epsin-1 (ent1) of Schizosaccharomyces pombe (strain 972 / ATCC 24843) (Fission yeast).